The primary structure comprises 157 residues: Probable calcium-binding protein CML15 (157 aa).

EF-hand domains are found at residues 3–38 (DQIRQLKDIFDRFDMDADGSLTILELAALLRSLGLK), 39–74 (PSGDQIHVLLASMDSNGNGFVEFDELVGTILPDLNE), 78–113 (INSEQLLEIFKSFDRDGNGFISAAELAGAMAKMGQP), and 114–149 (LTYKELTEMIKEADTNGDGVISFGEFASIMAKSAVD). Ca(2+) contacts are provided by Asp-16, Asp-18, Asp-20, Ser-22, Glu-27, Asp-52, Asn-54, Asn-56, Glu-63, Asp-91, Asp-93, Asn-95, Glu-102, Asp-127, Asn-129, Asp-131, and Glu-138.

Potential calcium sensor. This chain is Probable calcium-binding protein CML15 (CML15), found in Arabidopsis thaliana (Mouse-ear cress).